Here is a 591-residue protein sequence, read N- to C-terminus: Pentatricopeptide repeat-containing protein At2g35130 (591 aa).

PPR repeat units lie at residues 154–188, 189–223, 227–262, 263–297, 298–332, 333–367, 368–402, 403–437, 438–472, 473–507, 508–542, and 543–573; these read DVIC…RYVP, TEDT…HVSP, GVTV…RCKP, TTET…QCKP, NICT…GLEP, DVYV…GCEP, DRAS…GIAP, TMKS…GVEP, DTFV…PCTA, DIST…NFRP, DVVT…GCAP, and DGGT…MHKG.

The protein belongs to the PPR family. P subfamily.

The sequence is that of Pentatricopeptide repeat-containing protein At2g35130 from Arabidopsis thaliana (Mouse-ear cress).